We begin with the raw amino-acid sequence, 153 residues long: Nucleoside diphosphate kinase (153 aa).

Residues K13, F61, R89, T95, R106, and N116 each contribute to the ATP site. H119 acts as the Pros-phosphohistidine intermediate in catalysis.

Belongs to the NDK family. Mg(2+) is required as a cofactor.

It is found in the cytoplasm. The protein resides in the cell membrane. The enzyme catalyses a 2'-deoxyribonucleoside 5'-diphosphate + ATP = a 2'-deoxyribonucleoside 5'-triphosphate + ADP. It carries out the reaction a ribonucleoside 5'-diphosphate + ATP = a ribonucleoside 5'-triphosphate + ADP. In terms of biological role, major role in the synthesis of nucleoside triphosphates other than ATP. The ATP gamma phosphate is transferred to the NDP beta phosphate via a ping-pong mechanism, using a phosphorylated active-site intermediate. In Gallus gallus (Chicken), this protein is Nucleoside diphosphate kinase.